The chain runs to 97 residues: U6-theraphotoxin-Hhn1a 4 (97 aa).

An N-terminal signal peptide occupies residues 1 to 33; that stretch reads MLIKQFSRRSKNMKVQILLAFAALFVLAVGSYA. Residues 34–61 constitute a propeptide that is removed on maturation; sequence SESKKLDLRDALLSAMFSADYQLNPQER. Disulfide bonds link C63–C77, C70–C82, and C76–C89.

It belongs to the neurotoxin 10 (Hwtx-1) family. 12 (Hntx-12) subfamily. In terms of tissue distribution, expressed by the venom gland.

The protein resides in the secreted. Its function is as follows. Ion channel inhibitor. The chain is U6-theraphotoxin-Hhn1a 4 from Cyriopagopus hainanus (Chinese bird spider).